The sequence spans 100 residues: Aspartyl/glutamyl-tRNA(Asn/Gln) amidotransferase subunit C (100 aa).

The protein belongs to the GatC family. In terms of assembly, heterotrimer of A, B and C subunits.

The catalysed reaction is L-glutamyl-tRNA(Gln) + L-glutamine + ATP + H2O = L-glutaminyl-tRNA(Gln) + L-glutamate + ADP + phosphate + H(+). It catalyses the reaction L-aspartyl-tRNA(Asn) + L-glutamine + ATP + H2O = L-asparaginyl-tRNA(Asn) + L-glutamate + ADP + phosphate + 2 H(+). Its function is as follows. Allows the formation of correctly charged Asn-tRNA(Asn) or Gln-tRNA(Gln) through the transamidation of misacylated Asp-tRNA(Asn) or Glu-tRNA(Gln) in organisms which lack either or both of asparaginyl-tRNA or glutaminyl-tRNA synthetases. The reaction takes place in the presence of glutamine and ATP through an activated phospho-Asp-tRNA(Asn) or phospho-Glu-tRNA(Gln). The protein is Aspartyl/glutamyl-tRNA(Asn/Gln) amidotransferase subunit C of Corynebacterium aurimucosum (strain ATCC 700975 / DSM 44827 / CIP 107346 / CN-1) (Corynebacterium nigricans).